The sequence spans 104 residues: Large ribosomal subunit protein uL23 (104 aa).

The protein belongs to the universal ribosomal protein uL23 family. Part of the 50S ribosomal subunit. Contacts protein L29, and trigger factor when it is bound to the ribosome.

In terms of biological role, one of the early assembly proteins it binds 23S rRNA. One of the proteins that surrounds the polypeptide exit tunnel on the outside of the ribosome. Forms the main docking site for trigger factor binding to the ribosome. The chain is Large ribosomal subunit protein uL23 from Leptospira borgpetersenii serovar Hardjo-bovis (strain JB197).